A 370-amino-acid polypeptide reads, in one-letter code: Flagellar P-ring protein (370 aa).

An N-terminal signal peptide occupies residues 1–27 (MPARPIPVPLLALALAAALAVPSPAAA).

Belongs to the FlgI family. As to quaternary structure, the basal body constitutes a major portion of the flagellar organelle and consists of four rings (L,P,S, and M) mounted on a central rod.

Its subcellular location is the periplasm. The protein localises to the bacterial flagellum basal body. Assembles around the rod to form the L-ring and probably protects the motor/basal body from shearing forces during rotation. This is Flagellar P-ring protein from Anaeromyxobacter sp. (strain K).